The primary structure comprises 241 residues: Small ribosomal subunit protein uS2 (241 aa).

The protein belongs to the universal ribosomal protein uS2 family.

The sequence is that of Small ribosomal subunit protein uS2 from Pectobacterium carotovorum subsp. carotovorum (strain PC1).